We begin with the raw amino-acid sequence, 237 residues long: Probable Bax inhibitor 1 (237 aa).

Over 1-29 (MNVFDRNINFDSLFKFSQISHSTQVHLKN) the chain is Cytoplasmic. The chain crosses the membrane as a helical span at residues 30 to 50 (VYSSLAVCMFVAAAGSYVHVV). Residues 51-52 (TR) lie on the Lumenal side of the membrane. Residues 53 to 73 (LFQGGMLSVLGSLGMMFWLAM) form a helical membrane-spanning segment. Over 74 to 86 (TPHNSETEKKRLA) the chain is Cytoplasmic. A helical membrane pass occupies residues 87 to 107 (ILAGFAFLTGVGLCPTLDFVI). Residues 108–112 (AINPS) lie on the Lumenal side of the membrane. A helical membrane pass occupies residues 113–133 (IIVTAFLGTSVIFVCFTLSAL). Over 134–139 (YAKRRS) the chain is Cytoplasmic. A helical membrane pass occupies residues 140–160 (YLFLGGTLMSGLSILFLMSMM). Over 161–166 (NMFFGS) the chain is Lumenal. A helical transmembrane segment spans residues 167-187 (VMLFKAHMYLGLLIMCGFVLX). The Cytoplasmic segment spans residues 188-206 (DTQLIIEKAENGDKDYVWH). An intramembrane region (helical) is located at residues 207 to 227 (SVDLFLDFITIFRKLMVILAL). Topologically, residues 228–237 (NDKDKKKEKK) are cytoplasmic.

It belongs to the BI1 family. As to expression, highly abundant in testis.

It is found in the endoplasmic reticulum membrane. In terms of biological role, suppressor of apoptosis. Modulates unfolded protein response signaling. Modulate ER calcium homeostasis by acting as a calcium-leak channel. In Paralichthys olivaceus (Bastard halibut), this protein is Probable Bax inhibitor 1 (tmbim6).